Here is a 192-residue protein sequence, read N- to C-terminus: dITP/XTP pyrophosphatase (192 aa).

7-12 (SNNKNK) provides a ligand contact to substrate. The active-site Proton acceptor is the D68. D68 is a binding site for Mg(2+). Residues T69, 148–151 (FGYD), K171, and 176–177 (HR) contribute to the substrate site.

The protein belongs to the HAM1 NTPase family. As to quaternary structure, homodimer. It depends on Mg(2+) as a cofactor.

The enzyme catalyses XTP + H2O = XMP + diphosphate + H(+). It carries out the reaction dITP + H2O = dIMP + diphosphate + H(+). It catalyses the reaction ITP + H2O = IMP + diphosphate + H(+). Functionally, pyrophosphatase that catalyzes the hydrolysis of nucleoside triphosphates to their monophosphate derivatives, with a high preference for the non-canonical purine nucleotides XTP (xanthosine triphosphate), dITP (deoxyinosine triphosphate) and ITP. Seems to function as a house-cleaning enzyme that removes non-canonical purine nucleotides from the nucleotide pool, thus preventing their incorporation into DNA/RNA and avoiding chromosomal lesions. This is dITP/XTP pyrophosphatase from Flavobacterium johnsoniae (strain ATCC 17061 / DSM 2064 / JCM 8514 / BCRC 14874 / CCUG 350202 / NBRC 14942 / NCIMB 11054 / UW101) (Cytophaga johnsonae).